The following is a 370-amino-acid chain: Tryptophan--tRNA ligase (370 aa).

Positions 75–83 (PSGKMHFGH) match the 'HIGH' region motif. A 'KMSKS' region motif is present at residues 255-259 (KMSSS).

The protein belongs to the class-I aminoacyl-tRNA synthetase family.

It localises to the cytoplasm. The catalysed reaction is tRNA(Trp) + L-tryptophan + ATP = L-tryptophyl-tRNA(Trp) + AMP + diphosphate + H(+). The chain is Tryptophan--tRNA ligase from Methanocaldococcus jannaschii (strain ATCC 43067 / DSM 2661 / JAL-1 / JCM 10045 / NBRC 100440) (Methanococcus jannaschii).